Reading from the N-terminus, the 729-residue chain is Catalase-peroxidase (729 aa).

Residues 1 to 33 (MSAHNTNESAVGKCPFHEQKEEKSVLARGAGGG) are disordered. The segment covering 15–25 (PFHEQKEEKSV) has biased composition (basic and acidic residues). Residues 108-229 (WHSAGTYRTV…LGATEMGLIY (122 aa)) constitute a cross-link (tryptophyl-tyrosyl-methioninium (Trp-Tyr) (with M-255)). The Proton acceptor role is filled by His109. Residues 229-255 (YVNPEGPEASGNPASAAPAIRATFGNM) constitute a cross-link (tryptophyl-tyrosyl-methioninium (Tyr-Met) (with W-108)). His270 is a binding site for heme b.

It belongs to the peroxidase family. Peroxidase/catalase subfamily. In terms of assembly, homodimer or homotetramer. Requires heme b as cofactor. Formation of the three residue Trp-Tyr-Met cross-link is important for the catalase, but not the peroxidase activity of the enzyme.

It catalyses the reaction H2O2 + AH2 = A + 2 H2O. It carries out the reaction 2 H2O2 = O2 + 2 H2O. In terms of biological role, bifunctional enzyme with both catalase and broad-spectrum peroxidase activity. The sequence is that of Catalase-peroxidase from Erwinia tasmaniensis (strain DSM 17950 / CFBP 7177 / CIP 109463 / NCPPB 4357 / Et1/99).